The following is a 450-amino-acid chain: Thiamine biosynthesis regulatory protein (450 aa).

Residues 1–12 (MVNSKRQQRSKK) are compositionally biased toward basic residues. The disordered stretch occupies residues 1 to 23 (MVNSKRQQRSKKVASSSKVPPTK). The span at 13–23 (VASSSKVPPTK) shows a compositional bias: low complexity. Positions 30 to 57 (CWACRFKKRRCDENRPICSLCAKHGDNC) form a DNA-binding region, zn(2)-C6 fungal-type. Residues 210–234 (TDQLPSPGHSMSSAEETTTAALSSP) are disordered.

Its subcellular location is the nucleus. In terms of biological role, positive regulator of thiamine biosynthesis. The protein is Thiamine biosynthesis regulatory protein (THI2) of Saccharomyces cerevisiae (strain ATCC 204508 / S288c) (Baker's yeast).